Consider the following 1382-residue polypeptide: MKAPAVLAPGVLVLLFTLVRKSHGECEEALAKSKMNVNMKYQLPNFTADTPIQNVVLHEHHIFLGAINNIYVLNDKDLQKVAEYKTGPVLEHPDCLPCQDCSSKANLSGSVWKDNINMALLVDTYYDDQLITCGSVNRGTCQRHVLPPDNPADIHSKVHCMYSPQADEEPSKCPDCVVSALGTKVLLTEKDRFINFFVGNTVNSSYLPDHSLHSISVRRLKETQDGFKFLTDQSYIDVLPEFRDSYPIKYVHAFKHNQFIYFLTVQRETLESQTFHTRIIRFCSVDSGLHSYMEMPLECILTEKRRKRSAREEVFNILQAAYVSKPGAYLAKQIGALPDDDILYGVFAQSKLDSAEPMNRSAVCAFPIKYVNDFFNKIVNKNNVRCLQHFYGPNHEHCFNRTLLRNSSGCEVRRDEYRTEFTTALQRVDLFTGQFNQVLLTSISTFIKGNLTIANLGTSEGRFMQVVVSRSGLTTPHVNFRLDSHAVSPEVILEHPLNQNGYTLVITGKKITKIPLDGLGCDHFQSCSQCLSAPSFVQCGWCHNKCARAEECPNGMWTQEICLPTIYEVFPTSAPLEGGTTLTVCGWDFGFRRNNKFDLKKTRVLIGNDSCTLTLSESTTNTLKCTVGPAMNKHFNLSIIISNGRGTARYRTFSYVEPVITSISPSYGPKAGGTLVTLTGKYLNSGNSRHISIGGKTCTLKSVSDSVLECYTPAQSISTDFPVKLKIDLANREAYSFSYQEDPTVYEIHPNKSFISGGSTITGIGKNLNSVSVPRMVINVQEAGRNFTVACQHRSNSEIICCTTPSLQQLNLQLPLKTKAFFMLDGIHSNYFDLIYVHNPVFKPFKKPVMISMGNENVLEIKGDYIDPEAVKGEVLKVGNKSCENIHLQSEAVLCTVPNDLLKLNSELNIEWKQAVSSTVLGKVIVQPDQNFTGLIVGVVSISIILLLLLGLFLWLKKRKQIKDLGSELVRYDARVHTPHLDRLVSARSVSPTTEMVSNESVDYRATFPEDQFPNSSQNGSCRQVQYPLTDMSPILTNGDSDSSIPLLQNNVHIDLSALNPELVQAVQHVVIGPSSLIVHFNEVIGRGHFGCVYHGTLLDNGDKKIHCAVKSLNRITDIGEVSQFLTEGIIMKDFSHPNVLSLLGICLRSEGSPLVVLPYMKHGDLRNFIRNETHNPTVKDLIGFGLQVAKGMKYLASKKFVHRDLAARNCMLDEKFTVKVADFGLARDVYDKEYYSVHNKTGAKLPVKWMALESLQTQKFTTKSDVWSFGVLLWELMTRGAPPYPDVNTFDITVYLLQGRRLLQPEYCPDPLYEVMLKCWHPKAEMRPSFSELVSRISAIFSTFIGEHYVHVNTTYVNVKCVAPYPSLLSSQDSVDDEVDT.

The signal sequence occupies residues methionine 1–glycine 24. The Extracellular segment spans residues glutamate 25–leucine 935. In terms of domain architecture, Sema spans glutamate 27–leucine 516. The N-linked (GlcNAc...) asparagine glycan is linked to asparagine 45. 4 cysteine pairs are disulfide-bonded: cysteine 95–cysteine 101, cysteine 98–cysteine 160, cysteine 133–cysteine 141, and cysteine 173–cysteine 176. Asparagine 106 is a glycosylation site (N-linked (GlcNAc...) asparagine). 2 N-linked (GlcNAc...) asparagine glycosylation sites follow: asparagine 203 and asparagine 359. 2 cysteine pairs are disulfide-bonded: cysteine 299–cysteine 364 and cysteine 386–cysteine 398. N-linked (GlcNAc...) asparagine glycosylation is found at asparagine 400, asparagine 406, and asparagine 450. Cystine bridges form between cysteine 521/cysteine 539, cysteine 527/cysteine 562, cysteine 530/cysteine 546, and cysteine 542/cysteine 552. 3 IPT/TIG domains span residues proline 564–valine 656, proline 658–glutamine 740, and proline 743–valine 837. The O-linked (Man) threonine glycan is linked to threonine 583. Residues asparagine 608 and asparagine 636 are each glycosylated (N-linked (GlcNAc...) asparagine). Threonine 677 is a glycosylation site (O-linked (Man) threonine). A glycan (N-linked (GlcNAc...) asparagine) is linked at asparagine 751. Threonine 762 carries O-linked (Man) threonine glycosylation. N-linked (GlcNAc...) asparagine glycosylation is found at asparagine 786, asparagine 880, and asparagine 931. Residues isoleucine 936–leucine 956 form a helical membrane-spanning segment. The Cytoplasmic segment spans residues lysine 957 to threonine 1382. Serine 967 carries the phosphoserine modification. A Phosphothreonine modification is found at threonine 978. 3 positions are modified to phosphoserine: serine 991, serine 998, and serine 1001. Tyrosine 1004 carries the phosphotyrosine modification. Positions valine 1079 to isoleucine 1346 constitute a Protein kinase domain. Residues isoleucine 1085–valine 1093 and lysine 1111 contribute to the ATP site. Aspartate 1205 acts as the Proton acceptor in catalysis. The segment at leucine 1213–threonine 1382 is interaction with RANBP9. Residue tyrosine 1231 is modified to Phosphotyrosine. 2 positions are modified to phosphotyrosine; by autocatalysis: tyrosine 1235 and tyrosine 1236. Threonine 1290 bears the Phosphothreonine mark. An interaction with MUC20 region spans residues tryptophan 1321–valine 1360. Tyrosine 1350 and tyrosine 1357 each carry phosphotyrosine; by autocatalysis. Tyrosine 1366 is modified (phosphotyrosine).

This sequence belongs to the protein kinase superfamily. Tyr protein kinase family. Heterodimer made of an alpha chain (50 kDa) and a beta chain (145 kDa) which are disulfide linked. Binds PLXNB1. Interacts when phosphorylated with downstream effectors including STAT3, PIK3R1, SRC, PCLG1, GRB2 and GAB1. Interacts with SPSB1, SPSB2 and SPSB4. Interacts with INPP5D/SHIP1. When phosphorylated at Tyr-1357, interacts with INPPL1/SHIP2. Interacts with RANBP9 and RANBP10, as well as SPSB1, SPSB2, SPSB3 and SPSB4. SPSB1 binding occurs in the presence and in the absence of HGF, however HGF treatment has a positive effect on this interaction. Interacts with MUC20; prevents interaction with GRB2 and suppresses hepatocyte growth factor-induced cell proliferation. Interacts with GRB10. Interacts with PTPN1 and PTPN2. Interacts with HSP90AA1 and HSP90AB1; the interaction suppresses MET kinase activity. Interacts with tensin TNS3. Interacts (when phosphorylated) with tensin TNS4 (via SH2 domain); the interaction increases MET protein stability by inhibiting MET endocytosis and subsequent lysosomal degradation. In terms of processing, autophosphorylated in response to ligand binding on Tyr-1235 and Tyr-1236 in the kinase domain leading to further phosphorylation of Tyr-1350 and Tyr-1357 in the C-terminal multifunctional docking site. Dephosphorylated by PTPRJ at Tyr-1350 and Tyr-1366. Dephosphorylated by PTPN1 and PTPN2. Post-translationally, ubiquitinated. Ubiquitination by CBL regulates the receptor stability and activity through proteasomal degradation. O-mannosylation of IPT/TIG domains by TMEM260 is required for protein maturation. O-mannosylated residues are composed of single mannose glycans that are not elongated or modified.

The protein resides in the membrane. It catalyses the reaction L-tyrosyl-[protein] + ATP = O-phospho-L-tyrosyl-[protein] + ADP + H(+). In its inactive state, the C-terminal tail interacts with the catalytic domain and inhibits the kinase activity. Upon ligand binding, the C-terminal tail is displaced and becomes phosphorylated, thus increasing the kinase activity. Its function is as follows. Receptor tyrosine kinase that transduces signals from the extracellular matrix into the cytoplasm by binding to hepatocyte growth factor/HGF ligand. Regulates many physiological processes including proliferation, scattering, morphogenesis and survival. Ligand binding at the cell surface induces autophosphorylation of MET on its intracellular domain that provides docking sites for downstream signaling molecules. Following activation by ligand, interacts with the PI3-kinase subunit PIK3R1, PLCG1, SRC, GRB2, STAT3 or the adapter GAB1. Recruitment of these downstream effectors by MET leads to the activation of several signaling cascades including the RAS-ERK, PI3 kinase-AKT, or PLCgamma-PKC. The RAS-ERK activation is associated with the morphogenetic effects while PI3K/AKT coordinates prosurvival effects. During embryonic development, MET signaling plays a role in gastrulation, development and migration of muscles and neuronal precursors, angiogenesis and kidney formation. In adults, participates in wound healing as well as organ regeneration and tissue remodeling. Also promotes differentiation and proliferation of hematopoietic cells. This is Hepatocyte growth factor receptor (MET) from Loxodonta africana (African elephant).